The chain runs to 443 residues: 5-methylthioadenosine/S-adenosylhomocysteine deaminase (443 aa).

Residues H74 and H76 each contribute to the Zn(2+) site. 2 residues coordinate substrate: E103 and H196. H223 serves as a coordination point for Zn(2+). 2 residues coordinate substrate: E226 and D311. Position 311 (D311) interacts with Zn(2+).

The protein belongs to the metallo-dependent hydrolases superfamily. MTA/SAH deaminase family. It depends on Zn(2+) as a cofactor.

It catalyses the reaction S-adenosyl-L-homocysteine + H2O + H(+) = S-inosyl-L-homocysteine + NH4(+). It carries out the reaction S-methyl-5'-thioadenosine + H2O + H(+) = S-methyl-5'-thioinosine + NH4(+). Its function is as follows. Catalyzes the deamination of 5-methylthioadenosine and S-adenosyl-L-homocysteine into 5-methylthioinosine and S-inosyl-L-homocysteine, respectively. Is also able to deaminate adenosine. This Haloquadratum walsbyi (strain DSM 16790 / HBSQ001) protein is 5-methylthioadenosine/S-adenosylhomocysteine deaminase.